A 400-amino-acid polypeptide reads, in one-letter code: PHD finger protein 24 (400 aa).

The N-myristoyl glycine moiety is linked to residue G2. Over residues 28-38 (LRDRPSIRRTG) the composition is skewed to basic and acidic residues. The segment at 28–99 (LRDRPSIRRT…PEEFDRTSRF (72 aa)) is disordered. R36 is modified (omega-N-methylarginine). S43 is modified (phosphoserine). A Phosphothreonine modification is found at T47. S51 carries the phosphoserine modification. The span at 78 to 97 (AWERLRDGRGVEPEEFDRTS) shows a compositional bias: basic and acidic residues. A PHD-type zinc finger spans residues 129–190 (NDEMCDVCEV…TGWSCHYCDN (62 aa)).

The sequence is that of PHD finger protein 24 from Homo sapiens (Human).